The primary structure comprises 459 residues: tRNA modification GTPase MnmE (459 aa).

(6S)-5-formyl-5,6,7,8-tetrahydrofolate contacts are provided by Arg21, Glu84, and Lys123. Residues 219–380 form the TrmE-type G domain; the sequence is GMLTVIVGQP…LEKEIKQRVY (162 aa). Asn229 is a K(+) binding site. GTP is bound by residues 229-234, 248-254, and 273-276; these read NVGKSS, TDIPGTT, and DTAG. Ser233 serves as a coordination point for Mg(2+). The K(+) site is built by Thr248, Ile250, and Thr253. Thr254 contributes to the Mg(2+) binding site. Lys459 is a (6S)-5-formyl-5,6,7,8-tetrahydrofolate binding site.

Belongs to the TRAFAC class TrmE-Era-EngA-EngB-Septin-like GTPase superfamily. TrmE GTPase family. Homodimer. Heterotetramer of two MnmE and two MnmG subunits. The cofactor is K(+).

The protein resides in the cytoplasm. In terms of biological role, exhibits a very high intrinsic GTPase hydrolysis rate. Involved in the addition of a carboxymethylaminomethyl (cmnm) group at the wobble position (U34) of certain tRNAs, forming tRNA-cmnm(5)s(2)U34. The sequence is that of tRNA modification GTPase MnmE from Desulfitobacterium hafniense (strain Y51).